Here is a 177-residue protein sequence, read N- to C-terminus: Parathyroid hormone-related protein (177 aa).

The signal sequence occupies residues 1 to 24; it reads MLWRLVQQWSVAVFLLSYSVPSCG. Residues 25–34 constitute a propeptide that is removed on maturation; it reads RSVEELGRRL. An important for receptor binding region spans residues 57–68; the sequence is RFFLHHLIAEIH. Positions 74–149 are disordered; the sequence is ATSEVSPNSK…KRRTRSAWLT (76 aa). Polar residues predominate over residues 76 to 90; sequence SEVSPNSKPAPNTKN. The Nuclear localization signal motif lies at 108-129; it reads TNKVETYKEQPLKTPGKKKKSK. A compositionally biased stretch (basic and acidic residues) spans 109-118; the sequence is NKVETYKEQP. Residues 122–132 show a composition bias toward basic residues; the sequence is PGKKKKSKPGK.

The protein belongs to the parathyroid hormone family. PTHrP interacts with PTH1R (via N-terminal extracellular domain). Post-translationally, there are several secretory forms, including osteostatin, arising from endoproteolytic cleavage of the initial translation product. Each of these secretory forms is believed to have one or more of its own receptors that mediates the normal paracrine, autocrine and endocrine actions.

The protein localises to the secreted. The protein resides in the cytoplasm. It is found in the nucleus. Neuroendocrine peptide which is a critical regulator of cellular and organ growth, development, migration, differentiation and survival and of epithelial calcium ion transport. Acts by binding to its receptor, PTH1R, activating G protein-coupled receptor signaling. Regulates endochondral bone development and epithelial-mesenchymal interactions during the formation of the mammary glands and teeth. Required for skeletal homeostasis. Promotes mammary mesenchyme differentiation and bud outgrowth by modulating mesenchymal cell responsiveness to BMPs. Up-regulates BMPR1A expression in the mammary mesenchyme and this increases the sensitivity of these cells to BMPs and allows them to respond to BMP4 in a paracrine and/or autocrine fashion. BMP4 signaling in the mesenchyme, in turn, triggers epithelial outgrowth and augments MSX2 expression, which causes the mammary mesenchyme to inhibit hair follicle formation within the nipple sheath. In terms of biological role, potent inhibitor of osteoclastic bone resorption. This chain is Parathyroid hormone-related protein (PTHLH), found in Bos taurus (Bovine).